Here is a 189-residue protein sequence, read N- to C-terminus: Ras-like protein 1 (189 aa).

A GTP-binding site is contributed by Gly10–Ser17. The short motif at Tyr32 to Tyr40 is the Effector region element. Residues Asp57–Gln61 and Asn116–Asp119 each bind GTP. The residue at position 186 (Cys186) is a Cysteine methyl ester. Cys186 carries the S-geranylgeranyl cysteine lipid modification. Positions Lys187–Leu189 are cleaved as a propeptide — removed in mature form.

This sequence belongs to the small GTPase superfamily. Ras family.

Its subcellular location is the cell membrane. The enzyme catalyses GTP + H2O = GDP + phosphate + H(+). Its activity is regulated as follows. Alternates between an inactive form bound to GDP and an active form bound to GTP. Activated by a guanine nucleotide-exchange factor (GEF) and inactivated by a GTPase-activating protein (GAP). Ras proteins bind GDP/GTP and possess intrinsic GTPase activity. Plays a role in eye development by regulating cell growth, survival of postmitotic ommatidial cells and differentiation of photoreceptor cells. During larval development, mediates Ptth/tor signaling leading to the production of ecdysone, a hormone required for the initiation of metamorphosis. The chain is Ras-like protein 1 from Drosophila ananassae (Fruit fly).